A 185-amino-acid chain; its full sequence is UPF0669 protein C6orf120 homolog (185 aa).

A signal peptide spans 1–23 (MAARWRRILIVFVAAQVLCLVNT). An N-linked (GlcNAc...) asparagine glycan is attached at Asn-47.

Belongs to the UPF0669 family.

Its subcellular location is the secreted. This Gallus gallus (Chicken) protein is UPF0669 protein C6orf120 homolog.